The primary structure comprises 459 residues: ATP-dependent protease ATPase subunit HslU (459 aa).

ATP-binding positions include Val18, 60–65 (GVGKTE), Asp269, Glu337, and Arg409.

This sequence belongs to the ClpX chaperone family. HslU subfamily. A double ring-shaped homohexamer of HslV is capped on each side by a ring-shaped HslU homohexamer. The assembly of the HslU/HslV complex is dependent on binding of ATP.

It is found in the cytoplasm. Functionally, ATPase subunit of a proteasome-like degradation complex; this subunit has chaperone activity. The binding of ATP and its subsequent hydrolysis by HslU are essential for unfolding of protein substrates subsequently hydrolyzed by HslV. HslU recognizes the N-terminal part of its protein substrates and unfolds these before they are guided to HslV for hydrolysis. This Myxococcus xanthus (strain DK1622) protein is ATP-dependent protease ATPase subunit HslU.